A 181-amino-acid polypeptide reads, in one-letter code: ADP-ribosylation factor 2 (181 aa).

Residue Gly-2 is the site of N-myristoyl glycine attachment. GTP is bound by residues 24-31, 67-71, and 126-129; these read GLDAAGKT, DVGGQ, and NKQD.

This sequence belongs to the small GTPase superfamily. Arf family.

The protein resides in the golgi apparatus. GTP-binding protein that functions as an allosteric activator of the cholera toxin catalytic subunit, an ADP-ribosyltransferase. Involved in protein trafficking; may modulate vesicle budding and uncoating within the Golgi apparatus. This chain is ADP-ribosylation factor 2 (ARF2), found in Bos taurus (Bovine).